We begin with the raw amino-acid sequence, 883 residues long: Phosphoenolpyruvate carboxylase (883 aa).

Catalysis depends on residues His138 and Lys546.

The protein belongs to the PEPCase type 1 family. In terms of assembly, homotetramer. Requires Mg(2+) as cofactor.

It catalyses the reaction oxaloacetate + phosphate = phosphoenolpyruvate + hydrogencarbonate. With respect to regulation, the enzyme has distinct binding sites for each of the allosteric effectors such as acetyl-CoA, fructose 1,6-bisphosphate, guanosine 3'-diphosphate 5'-diphosphate, long chain fatty acids, and L-aspartate. Functionally, forms oxaloacetate, a four-carbon dicarboxylic acid source for the tricarboxylic acid cycle. This chain is Phosphoenolpyruvate carboxylase, found in Escherichia coli O157:H7.